Here is a 132-residue protein sequence, read N- to C-terminus: Holo-[acyl-carrier-protein] synthase (132 aa).

Mg(2+) is bound by residues D8 and E62.

The protein belongs to the P-Pant transferase superfamily. AcpS family. Requires Mg(2+) as cofactor.

It localises to the cytoplasm. The enzyme catalyses apo-[ACP] + CoA = holo-[ACP] + adenosine 3',5'-bisphosphate + H(+). In terms of biological role, transfers the 4'-phosphopantetheine moiety from coenzyme A to a Ser of acyl-carrier-protein. This chain is Holo-[acyl-carrier-protein] synthase, found in Polaromonas sp. (strain JS666 / ATCC BAA-500).